Here is a 487-residue protein sequence, read N- to C-terminus: Schwannomin-interacting protein 1 (487 aa).

4 disordered regions span residues 1–74 (MERS…VSAL), 88–221 (VIDE…PVPP), 236–260 (FREQ…NERE), and 308–354 (SGSD…SLDD). Over residues 14–27 (DQGKHSDSDYREDG) the composition is skewed to basic and acidic residues. Over residues 32–67 (SDAGSSSSSSRASSQSNSTKVTPCSECKSSSSPGGS) the composition is skewed to low complexity. Positions 92 to 106 (WAPEEDGEEEEEEDE) are enriched in acidic residues. Basic and acidic residues-rich tracts occupy residues 107–123 (RDQR…REPG) and 153–162 (HQHDPQDLRH). Residue S117 is modified to Phosphoserine. Residues 242-255 (RNQGQARTNSTSAQ) are compositionally biased toward polar residues. The span at 309-323 (GSDKDSDADDSKTET) shows a compositional bias: basic and acidic residues. Residues 324–335 (SLDTPLSPMSKQ) show a composition bias toward polar residues. The span at 344–354 (TTEEESESLDD) shows a compositional bias: acidic residues. The stretch at 424 to 458 (IGQLQVIVNDLHSQIESLNEELVQLLLIRDELHTE) forms a coiled coil.

This sequence belongs to the SCHIP1 family. As to quaternary structure, homooligomer (via coiled coil domain). Interacts with NF2; the interaction is direct. Interacts with ANK3. Preferentially expressed in brain, skeletal muscles and heart. Also expressed in detected in pancreas, kidney, liver, lung, and placenta.

The protein resides in the cytoplasm. The polypeptide is Schwannomin-interacting protein 1 (Homo sapiens (Human)).